A 236-amino-acid polypeptide reads, in one-letter code: Probable metal transport system ATP-binding protein CT_416 (236 aa).

The ABC transporter domain maps to 5–236; it reads MLLENVSFRY…FCCNTFGRCP (232 aa). 39-46 is a binding site for ATP; it reads GPNGGGKT.

This sequence belongs to the ABC transporter superfamily.

The protein resides in the cell inner membrane. Functionally, part of an ATP-driven transport system CT_415/CT_416/CT_417 for a metal. Probably responsible for energy coupling to the transport system. This Chlamydia trachomatis serovar D (strain ATCC VR-885 / DSM 19411 / UW-3/Cx) protein is Probable metal transport system ATP-binding protein CT_416.